Here is a 161-residue protein sequence, read N- to C-terminus: Globin CTT-VIIB-3 (161 aa).

Residues 1-16 (MKFFAVLALCIVGAIA) form the signal peptide. One can recognise a Globin domain in the interval 18–161 (PLTADEASLV…NTYAIVVPRL (144 aa)). Heme b is bound by residues H76 and H111.

Belongs to the globin family. Homodimer.

In Chironomus thummi thummi (Midge), this protein is Globin CTT-VIIB-3 (CTT-7B3).